A 307-amino-acid polypeptide reads, in one-letter code: Plastid division protein PDV2 (307 aa).

N-acetylmethionine is present on Met1. Over 1 to 213 (MEDEEGIGLI…SGGSSHGVIR (213 aa)) the chain is Cytoplasmic. A disordered region spans residues 28–66 (SSTTVSDNGDGNEDLSPGEGRKSEIIGNQDKDFDSISSE). Basic and acidic residues predominate over residues 46 to 61 (EGRKSEIIGNQDKDFD). Phosphoserine is present on Ser50. Residues 76-103 (LLRIRDALEALESQLASLQNLRQRQQYE) adopt a coiled-coil conformation. The segment at 174 to 206 (HLPSKKKSDANGFGSGHVRNEAEAKSPNGGSGG) is disordered. A helical transmembrane segment spans residues 214–234 (FLGSVAKIVLPIIGVISLLSA). Over 235–307 (SGYGPEMRKR…AKRDVTYGYG (73 aa)) the chain is Chloroplast intermembrane. Residues 235–307 (SGYGPEMRKR…AKRDVTYGYG (73 aa)) are ARC6 binding.

In terms of assembly, interacts (via C-terminus) with ARC6 (via C-terminus) in the chloroplast intermembrane space; this interaction induces ARC6 homodimerization and leads to the formation of a heterotetramer containing two ARC6 and two PDV2 subunits. Interacts with ARC5/DRP5B. Mostly expressed in young leaves.

Its subcellular location is the plastid. It localises to the chloroplast outer membrane. Its function is as follows. Component of the plastid division machinery consisting in a binary fission accomplished by the simultaneous constriction of the FtsZ ring on the stromal side of the inner envelope membrane, and the ARC5/DRP5B ring on the cytosolic side of the outer envelope membrane. Positive factor of chloroplast division required, with a dosage effect, to mediate the recruitment and dimerization of ARC5/DRP5B at the midplastid constriction site in the cytoplasm at plastid outer envelope membranes (OEMs). Prevents ARC5/DRP5B GTPase acrivity. Relays plastid division site position between stroma and outer surface via interactions with the cytoplasmic ARC5/DRP5B and the inner membrane ARC6 that recruits stromal FtsZ ring. Binding to phosphatidylinositol 4-phosphate (PI4P) modulates negatively chloroplast division. This is Plastid division protein PDV2 from Arabidopsis thaliana (Mouse-ear cress).